A 122-amino-acid chain; its full sequence is Chorismate mutase AroH (122 aa).

In terms of domain architecture, Chorismate mutase aroH-type spans 2 to 120 (VRGIRGAITV…AVRLRPDLES (119 aa)). Arg-6, Arg-89, and Tyr-107 together coordinate prephenate.

In terms of assembly, homotrimer.

The protein resides in the cytoplasm. It catalyses the reaction chorismate = prephenate. Its pathway is metabolic intermediate biosynthesis; prephenate biosynthesis; prephenate from chorismate: step 1/1. Its activity is regulated as follows. Inhibited by 40% with 500 uM tyrosine, and a tyrosine concentration as high as 5 mM reduced activity to 5%. In terms of biological role, catalyzes the Claisen rearrangement of chorismate to prephenate. Probably involved in the aromatic amino acid biosynthesis. This Thermus thermophilus protein is Chorismate mutase AroH.